Here is an 855-residue protein sequence, read N- to C-terminus: DNA mismatch repair protein MutS (855 aa).

613-620 (GPNMGGKS) contacts ATP. Positions 796–817 (TTSLPHEQPRAKPGKPAIPQQS) are disordered.

Belongs to the DNA mismatch repair MutS family.

In terms of biological role, this protein is involved in the repair of mismatches in DNA. It is possible that it carries out the mismatch recognition step. This protein has a weak ATPase activity. This is DNA mismatch repair protein MutS from Pseudomonas syringae pv. tomato (strain ATCC BAA-871 / DC3000).